A 690-amino-acid polypeptide reads, in one-letter code: Capsid protein VP1 (690 aa).

The tract at residues 1–80 (MSKIPQHYPG…GGGGGGGGGG (80 aa)) is disordered. Residues 40 to 53 (TIEEMDSTEAEQMD) are compositionally biased toward acidic residues. The span at 64-80 (AGGGGGGGGGGGGGGGG) shows a compositional bias: gly residues.

It belongs to the parvoviridae capsid protein family.

The protein resides in the virion. It localises to the host nucleus. Its function is as follows. Capsid protein self-assembles to form an icosahedral capsid with a T=1 symmetry, about 25 nm in diameter, and consisting of 60 copies of two size variants of the capsid proteins, VP1 (10% abundance) and VP2 (90% abundance), which differ by the presence of an N-terminal extension in the minor protein VP1. Capsid proteins are responsible for the attachment to host cell receptors. This attachment induces virion internalization predominantly through clathrin-dependent endocytosis. VP1 binds DNA and may therefore play a role in viral DNA encapsidation. The sequence is that of Capsid protein VP1 from Aleutian mink disease parvovirus (strain G) (ADV).